The chain runs to 150 residues: uncharacterized protein (150 aa).

The 146-residue stretch at 4–149 folds into the N-acetyltransferase domain; sequence IQIRNYQPGD…TNFYMRYKPQ (146 aa).

It belongs to the acetyltransferase family.

This is an uncharacterized protein from Escherichia coli (strain K12).